Here is a 410-residue protein sequence, read N- to C-terminus: LL-diaminopimelate aminotransferase (410 aa).

Substrate-binding residues include Tyr-15 and Gly-42. Residues Tyr-72, 108 to 109 (AK), Tyr-132, Asn-187, Tyr-218, and 246 to 248 (SFS) contribute to the pyridoxal 5'-phosphate site. Residues Lys-109, Tyr-132, and Asn-187 each contribute to the substrate site. N6-(pyridoxal phosphate)lysine is present on Lys-249. Arg-257 and Asn-292 together coordinate pyridoxal 5'-phosphate. Substrate is bound by residues Asn-292 and Arg-388.

This sequence belongs to the class-I pyridoxal-phosphate-dependent aminotransferase family. LL-diaminopimelate aminotransferase subfamily. In terms of assembly, homodimer. The cofactor is pyridoxal 5'-phosphate.

The catalysed reaction is (2S,6S)-2,6-diaminopimelate + 2-oxoglutarate = (S)-2,3,4,5-tetrahydrodipicolinate + L-glutamate + H2O + H(+). It functions in the pathway amino-acid biosynthesis; L-lysine biosynthesis via DAP pathway; LL-2,6-diaminopimelate from (S)-tetrahydrodipicolinate (aminotransferase route): step 1/1. Involved in the synthesis of meso-diaminopimelate (m-DAP or DL-DAP), required for both lysine and peptidoglycan biosynthesis. Catalyzes the direct conversion of tetrahydrodipicolinate to LL-diaminopimelate. Can also use m-DAP instead of LL-DAP as the amino-group donor. In Acetivibrio thermocellus (strain ATCC 27405 / DSM 1237 / JCM 9322 / NBRC 103400 / NCIMB 10682 / NRRL B-4536 / VPI 7372) (Clostridium thermocellum), this protein is LL-diaminopimelate aminotransferase.